The chain runs to 178 residues: PEST proteolytic signal-containing nuclear protein (178 aa).

Over residues 1 to 15 (MADGKAGEEKPEKPQ) the composition is skewed to basic and acidic residues. Residues 1–82 (MADGKAGEEK…FAIGSQTARK (82 aa)) form a disordered region. Ala2 is subject to N-acetylalanine. Positions 37–47 (SSSNGGESSSR) are enriched in low complexity. Ser53 carries the post-translational modification Phosphoserine. Lys64 carries the N6-acetyllysine modification. Phosphoserine occurs at positions 77, 87, and 119. The disordered stretch occupies residues 134–158 (NIGRDTPTSAGPNSFNKGKHGFSDN). Position 139 is a phosphothreonine (Thr139). A compositionally biased stretch (polar residues) spans 139 to 149 (TPTSAGPNSFN). Position 147 is a phosphoserine (Ser147). Lys150 and Lys152 each carry N6-acetyllysine.

As to quaternary structure, interacts with UHRF2/NIRF. Post-translationally, ubiquitinated; mediated by UHRF2 and leading to its subsequent proteasomal degradation. N-terminally acetylated in a HYPK-dependent manner by the NatA acetyltransferase complex which is composed of NAA10 and NAA15.

The protein localises to the nucleus. Its function is as follows. May be involved in cell cycle regulation. This chain is PEST proteolytic signal-containing nuclear protein (Pcnp), found in Mus musculus (Mouse).